A 227-amino-acid polypeptide reads, in one-letter code: Ribose-5-phosphate isomerase A (227 aa).

Residues 28–31 (TGST), 84–87 (DGAD), and 97–100 (KGGG) contribute to the substrate site. Glu-106 serves as the catalytic Proton acceptor. Lys-124 is a binding site for substrate.

The protein belongs to the ribose 5-phosphate isomerase family. As to quaternary structure, homodimer.

It catalyses the reaction aldehydo-D-ribose 5-phosphate = D-ribulose 5-phosphate. The protein operates within carbohydrate degradation; pentose phosphate pathway; D-ribose 5-phosphate from D-ribulose 5-phosphate (non-oxidative stage): step 1/1. Catalyzes the reversible conversion of ribose-5-phosphate to ribulose 5-phosphate. The protein is Ribose-5-phosphate isomerase A of Lactiplantibacillus plantarum (strain ATCC BAA-793 / NCIMB 8826 / WCFS1) (Lactobacillus plantarum).